Here is a 487-residue protein sequence, read N- to C-terminus: Transmembrane protein 161B (487 aa).

N-linked (GlcNAc...) asparagine glycosylation occurs at asparagine 34. A helical membrane pass occupies residues 107–127 (LVDFTVAATVVYLVTEVYYNF). Asparagine 135 is a glycosylation site (N-linked (GlcNAc...) asparagine). The next 2 helical transmembrane spans lie at 136-156 (ISLV…FSLT) and 169-189 (SVCV…LIVT). Asparagine 203 is a glycosylation site (N-linked (GlcNAc...) asparagine). 5 consecutive transmembrane segments (helical) span residues 228 to 248 (FKFF…FPGL), 265 to 285 (ITQT…LLWV), 305 to 325 (LMTE…LCAL), 367 to 387 (VFYY…MLLH), and 459 to 479 (LSFL…FGLF).

The protein belongs to the TMEM161 family.

The protein resides in the cell membrane. Its function is as follows. Essential for maintaining normal cardiac rhythm in the developing heart and for neonatal survival. Inhibits potassium and calcium currents in the cardiomyocytes, this assists in timely action potential repolarization and thereby maintains normal cardiac rhythm. The chain is Transmembrane protein 161B (TMEM161B) from Homo sapiens (Human).